The following is a 399-amino-acid chain: Elongation factor Tu (399 aa).

The tr-type G domain maps to 10–209 (KPHVNIGTIG…AVDEYIPEPT (200 aa)). Positions 19–26 (GHVDHGKT) are G1. Position 19–26 (19–26 (GHVDHGKT)) interacts with GTP. Thr-26 is a binding site for Mg(2+). A G2 region spans residues 60–64 (GITIA). The interval 81–84 (DCPG) is G3. GTP is bound by residues 81 to 85 (DCPGH) and 136 to 139 (NKED). Positions 136–139 (NKED) are G4. A G5 region spans residues 174 to 176 (SAK).

This sequence belongs to the TRAFAC class translation factor GTPase superfamily. Classic translation factor GTPase family. EF-Tu/EF-1A subfamily. In terms of assembly, monomer.

It localises to the cytoplasm. The catalysed reaction is GTP + H2O = GDP + phosphate + H(+). Its function is as follows. GTP hydrolase that promotes the GTP-dependent binding of aminoacyl-tRNA to the A-site of ribosomes during protein biosynthesis. The polypeptide is Elongation factor Tu (Sulfurimonas denitrificans (strain ATCC 33889 / DSM 1251) (Thiomicrospira denitrificans (strain ATCC 33889 / DSM 1251))).